A 179-amino-acid polypeptide reads, in one-letter code: Large ribosomal subunit protein uL5 (179 aa).

Belongs to the universal ribosomal protein uL5 family. Part of the 50S ribosomal subunit; part of the 5S rRNA/L5/L18/L25 subcomplex. Contacts the 5S rRNA and the P site tRNA. Forms a bridge to the 30S subunit in the 70S ribosome.

Its function is as follows. This is one of the proteins that bind and probably mediate the attachment of the 5S RNA into the large ribosomal subunit, where it forms part of the central protuberance. In the 70S ribosome it contacts protein S13 of the 30S subunit (bridge B1b), connecting the 2 subunits; this bridge is implicated in subunit movement. Contacts the P site tRNA; the 5S rRNA and some of its associated proteins might help stabilize positioning of ribosome-bound tRNAs. The protein is Large ribosomal subunit protein uL5 of Prochlorococcus marinus (strain MIT 9301).